The primary structure comprises 311 residues: MIKLLFMGTPQFSATVLKGLLDNPAYEILGVVTQPDRAVGRKKDIKVTPVKQLALEHGISIYQPEKLSGSQELIEITGLGADGIITAAFGQFLPTLLLDSVSFAINVHASLLPKYRGGAPIHYAIMNGDKEAGVTIMEMIKEMDAGDVVAKASTPILETDNVGTLFEKLAIIGRDLLLDSLPAYLSGELKPIPQDHSQATFSPNISPEQEKLDWTMSNQEVFNHIRGMNPWPVAHTFLEGQRLKIYEAQLAEGEGLPGQVIVKTKKSLVIATGQGALSLIVVQPAGKPKMSIIDFLNGIGRKLEVGDIIGR.

110 to 113 contributes to the (6S)-5,6,7,8-tetrahydrofolate binding site; that stretch reads SLLP.

This sequence belongs to the Fmt family.

The catalysed reaction is L-methionyl-tRNA(fMet) + (6R)-10-formyltetrahydrofolate = N-formyl-L-methionyl-tRNA(fMet) + (6S)-5,6,7,8-tetrahydrofolate + H(+). Its function is as follows. Attaches a formyl group to the free amino group of methionyl-tRNA(fMet). The formyl group appears to play a dual role in the initiator identity of N-formylmethionyl-tRNA by promoting its recognition by IF2 and preventing the misappropriation of this tRNA by the elongation apparatus. The polypeptide is Methionyl-tRNA formyltransferase (Streptococcus pyogenes serotype M6 (strain ATCC BAA-946 / MGAS10394)).